Reading from the N-terminus, the 194-residue chain is Large ribosomal subunit protein bL25B (194 aa).

The protein belongs to the bacterial ribosomal protein bL25 family. CTC subfamily. In terms of assembly, part of the 50S ribosomal subunit; part of the 5S rRNA/L5/L18/L25 subcomplex. Contacts the 5S rRNA. Binds to the 5S rRNA independently of L5 and L18.

This is one of the proteins that binds to the 5S RNA in the ribosome where it forms part of the central protuberance. This is Large ribosomal subunit protein bL25B from Symbiobacterium thermophilum (strain DSM 24528 / JCM 14929 / IAM 14863 / T).